The sequence spans 152 residues: MESGTEEYELNGDLRPGSPGSPDALPPRWGLRNRPINVNHYANKKSAAESMLDIALLMANASQLKAVVEQGNDFAFFVPLVVLISISLVLQIGVGVLLIFLVKYDLNNPAKHAKLDFLNNLATGLVFIIVVVNIFITAFGVQKPVMDVAPRQ.

N-acetylmethionine is present on M1. The segment covering 1-10 (MESGTEEYEL) has biased composition (acidic residues). The segment at 1-29 (MESGTEEYELNGDLRPGSPGSPDALPPRW) is disordered. The Extracellular segment spans residues 1 to 78 (MESGTEEYEL…EQGNDFAFFV (78 aa)). Phosphoserine occurs at positions 18 and 21. Residues 26-37 (PPRWGLRNRPIN) are N-terminal adhesion motif. The segment at 40–69 (HYANKKSAAESMLDIALLMANASQLKAVVE) is required to induce plasma membrane rupture. The helix alpha1 stretch occupies residues 44 to 55 (KKSAAESMLDIA). Residues 58–74 (MANASQLKAVVEQGNDF) form a helix alpha2 region. The N-linked (GlcNAc...) asparagine glycan is linked to N60. Residues 79–103 (PLVVLISISLVLQIGVGVLLIFLVK) form a helical membrane-spanning segment. Residues 104–113 (YDLNNPAKHA) lie on the Cytoplasmic side of the membrane. Residues 114-138 (KLDFLNNLATGLVFIIVVVNIFITA) traverse the membrane as a helical segment. The Extracellular segment spans residues 139-152 (FGVQKPVMDVAPRQ).

The protein belongs to the ninjurin family. Homodimer; in absence of death stimuli, forms an inactive homodimer. Homooligomer; in response to death stimuli, homooligomerizes into long, highly branched filaments and large, ring-shaped structures in the membrane. In terms of processing, cleaved by MMP9 protease to generate the Secreted ninjurin-1 form. Post-translationally, N-linked glycosylation is required for homooligomerization.

Its subcellular location is the cell membrane. The protein localises to the synaptic cell membrane. It is found in the secreted. With respect to regulation, in response to death stimuli, homooligomerizes and disrupts membrane integrity by introducing the hydrophilic faces of alpha1 and alpha2 helices into the hydrophobic membrane. Homooligomerization and ability to mediate plasma membrane rupture is inhibited by glycine; it is unclear whether glycine directly or indirectly inhibits homooligomerization. In normal conditions, NINJ1 is autoinhibited via formation of a homodimer: in the inactive homodimer, the alpha1 and alpha2 helices (residues 44-74) form a single transmembrane region without a kink, in which hydrophilic faces of alpha1 and alpha2 helices are sequestered. In terms of biological role, effector of various programmed cell death, such as pyroptosis and necroptosis, which mediates plasma membrane rupture (cytolysis). Oligomerizes in response to death stimuli and forms ring-like structures on the plasma membrane: acts by cutting and shedding membrane disks, like a cookie cutter, leading to membrane damage and loss that cannot be repaired by the cell. Plasma membrane rupture leads to release intracellular molecules named damage-associated molecular patterns (DAMPs) that propagate the inflammatory response. Mechanistically, mediates plasma membrane rupture by introducing hydrophilic faces of 2 alpha helices into the hydrophobic membrane. Induces plasma membrane rupture downstream of Gasdermin (GSDMA, GSDMB, GSDMC, GSDMD, or GSDME) or MLKL during pyroptosis or necroptosis, respectively. Acts as an effector of PANoptosis downstream of CASP1, CASP4, CASP8 and RIPK3. Also induces plasma membrane rupture in response to cell swelling caused by osmotic stress and ferroptosis downstream of lipid peroxidation. Acts as a regulator of Toll-like receptor 4 (TLR4) signaling triggered by lipopolysaccharide (LPS) during systemic inflammation; directly binds LPS. Involved in leukocyte migration during inflammation by promoting transendothelial migration of macrophages via homotypic binding. Promotes the migration of monocytes across the brain endothelium to central nervous system inflammatory lesions. Also acts as a homophilic transmembrane adhesion molecule involved in various processes such as axonal growth, cell chemotaxis and angiogenesis. Promotes cell adhesion by mediating homophilic interactions via its extracellular N-terminal adhesion motif (N-NAM). Involved in the progression of the inflammatory stress by promoting cell-to-cell interactions between immune cells and endothelial cells. Plays a role in nerve regeneration by promoting maturation of Schwann cells. Acts as a regulator of angiogenesis. Promotes the formation of new vessels by mediating the interaction between capillary pericyte cells and endothelial cells. Also mediates vascular functions in penile tissue as well as vascular formation. Promotes osteoclasts development by enhancing the survival of prefusion osteoclasts. Also involved in striated muscle growth and differentiation. Also involved in cell senescence in a p53/TP53 manner, possibly by acting as an indirect regulator of p53/TP53 mRNA translation. Its function is as follows. Secreted form generated by cleavage, which has chemotactic activity. Acts as an anti-inflammatory mediator by promoting monocyte recruitment, thereby ameliorating atherosclerosis. The protein is Ninjurin-1 of Mus musculus (Mouse).